The chain runs to 1482 residues: Cystic fibrosis transmembrane conductance regulator (1482 aa).

Topologically, residues 1 to 77 (MQRSPLEKAS…KLINALRRCF (77 aa)) are cytoplasmic. Residues 78-98 (FWRFMFYGILLYLGEVTKAVQ) form a helical membrane-spanning segment. The region spanning 81 to 365 (FMFYGILLYL…WAVQTWYDSL (285 aa)) is the ABC transmembrane type-1 1 domain. Over 99 to 122 (PLLLGRIIASYDPDNKVERSIAIY) the chain is Extracellular. Residues 123 to 146 (LGIGLCLLFIVRTLLLHPAIFGLH) traverse the membrane as a helical segment. The Cytoplasmic segment spans residues 147–195 (HIGMQMRIAMFSLIYKKILKLSSRVLDKISIGQLVSLLSNNLNKFDEGL). The chain crosses the membrane as a helical span at residues 196 to 216 (ALAHFVWIAPLQVTLLMGLLW). The Extracellular segment spans residues 217–222 (ELLQAS). Residues 223–243 (AFCGLGFLIVLALVQAGLGRM) form a helical membrane-spanning segment. Residues 244 to 298 (MMKYRDQRAGKINERLVITSEMIENIQSVKAYCWEEAMEKMIENLRQTELKLTRK) are Cytoplasmic-facing. A helical membrane pass occupies residues 299 to 319 (AAYVRYFNSSAFFFSGFFVVF). Topologically, residues 320–339 (LSVLPYALIKGIILRKIFTT) are extracellular. The helical transmembrane segment at 340–358 (ISFCIVLRMAVTRQFPWAV) threads the bilayer. At 359 to 859 (QTWYDSLGAI…YLRYLAVNKS (501 aa)) the chain is on the cytoplasmic side. ATP contacts are provided by residues Trp-401, 458–465 (GSTGAGKT), and Gln-493. Residues 423-646 (NGDNSLFFSN…RPDFSSKLMG (224 aa)) form the ABC transporter 1 domain. Cys-524 carries S-palmitoyl cysteine lipidation. 2 positions are modified to phosphoserine: Ser-549 and Ser-660. The interval 654–832 (SAERRNSILT…EEINEEYLKE (179 aa)) is disordered R region. At Ser-670 the chain carries Phosphoserine; by PKA. The residue at position 686 (Ser-686) is a Phosphoserine. Lys-688 participates in a covalent cross-link: Glycyl lysine isopeptide (Lys-Gly) (interchain with G-Cter in ubiquitin). A phosphoserine mark is found at Ser-700 and Ser-712. A Phosphothreonine modification is found at Thr-717. Phosphoserine occurs at positions 738, 769, 791, 796, and 814. The helical transmembrane segment at 860–880 (LSLVLIWCLVIFLAEVAISLA) threads the bilayer. The ABC transmembrane type-1 2 domain occupies 860-1156 (LSLVLIWCLV…AVNSSIDVDS (297 aa)). At 881–919 (VLLLLDKSPRYSKGNGTASGNGSSAVIITSTSSYYLFYI) the chain is on the extracellular side. N-linked (GlcNAc...) asparagine glycans are attached at residues Asn-895 and Asn-901. Residues 920 to 940 (YVGVADTLLALGFFRGLPLVH) traverse the membrane as a discontinuously helical segment. Over 941–991 (TLITVSKILHHRMLHSVLRAPMSTLNMLKAGGILNRFSKDIAILDDLLPLT) the chain is Cytoplasmic. The chain crosses the membrane as a helical span at residues 992–1012 (IFDFVQLLLIVIGAVAVVSVL). At 1013–1014 (QP) the chain is on the extracellular side. The chain crosses the membrane as a helical span at residues 1015–1035 (YIFLATVPVIAAFVILRGYFL). The Cytoplasmic segment spans residues 1036–1096 (HTSQQLKQLE…TANWFLYLST (61 aa)). A helical membrane pass occupies residues 1097 to 1117 (LRWFQMRIEMIFVVFFIAVTF). Over 1118 to 1131 (ISILTTGEGEGTVG) the chain is Extracellular. The helical transmembrane segment at 1132–1152 (IILTLAMNIMGTLQWAVNSSI) threads the bilayer. Over 1153 to 1482 (DVDSLMRSVS…TEEEVQETRL (330 aa)) the chain is Cytoplasmic. The region spanning 1212–1445 (MTVKDLTARY…KSLFRQAISP (234 aa)) is the ABC transporter 2 domain. ATP is bound by residues Tyr-1221 and 1246–1253 (GRTGAGKS). The interaction with GORASP2 stretch occupies residues 1388–1482 (RTLKQAFADC…TEEEVQETRL (95 aa)). The S-palmitoyl cysteine moiety is linked to residue Cys-1397. Ser-1446 and Ser-1458 each carry phosphoserine. A disordered region spans residues 1450-1482 (KLFPRRNSSKHKSRSPITALKEETEEEVQETRL). The segment covering 1451 to 1463 (LFPRRNSSKHKSR) has biased composition (basic residues). The segment covering 1472 to 1482 (ETEEEVQETRL) has biased composition (acidic residues). A PDZ-binding motif is present at residues 1480-1482 (TRL).

It belongs to the ABC transporter superfamily. ABCC family. CFTR transporter (TC 3.A.1.202) subfamily. As to quaternary structure, monomer; does not require oligomerization for channel activity. May form oligomers in the membrane. Interacts with SLC26A3, SLC26A6 and NHERF1. Interacts with SHANK2. Interacts with MYO6. Interacts (via C-terminus) with GOPC (via PDZ domain); this promotes CFTR internalization and thereby decreases channel activity. Interacts with SLC4A7 through NHERF1. Found in a complex with MYO5B and RAB11A. Interacts with ANO1. Interacts with SLC26A8. Interacts with AHCYL1; the interaction increases CFTR activity. Interacts with CSE1L. The core-glycosylated form interacts with GORASP2 (via PDZ GRASP-type 1 domain) in respone to ER stress. Interacts with MARCHF2; the interaction leads to CFTR ubiqtuitination and degradation. Interacts with ADGRG2. Post-translationally, N-glycosylated. Phosphorylated; cAMP treatment promotes phosphorylation and activates the channel. Dephosphorylation decreases the ATPase activity (in vitro). Phosphorylation at PKA sites activates the channel. Phosphorylation at PKC sites enhances the response to phosphorylation by PKA. Phosphorylated by AMPK; this inhibits channel activity. In terms of processing, ubiquitinated, leading to its degradation in the lysosome. Deubiquitination by USP10 in early endosomes enhances its endocytic recycling to the cell membrane. Ubiquitinated by RNF185 during ER stress. Ubiquitinated by MARCHF2.

The protein localises to the apical cell membrane. The protein resides in the early endosome membrane. It localises to the cell membrane. Its subcellular location is the recycling endosome membrane. It is found in the endoplasmic reticulum membrane. The protein localises to the nucleus. The catalysed reaction is ATP + H2O + closed Cl(-) channel = ADP + phosphate + open Cl(-) channel.. The enzyme catalyses chloride(in) = chloride(out). It carries out the reaction hydrogencarbonate(in) = hydrogencarbonate(out). It catalyses the reaction ATP + H2O = ADP + phosphate + H(+). Functionally, epithelial ion channel that plays an important role in the regulation of epithelial ion and water transport and fluid homeostasis. Mediates the transport of chloride ions across the cell membrane. Possesses an intrinsic ATPase activity and utilizes ATP to gate its channel; the passive flow of anions through the channel is gated by cycles of ATP binding and hydrolysis by the ATP-binding domains. The ion channel is also permeable to HCO(3)(-); selectivity depends on the extracellular chloride concentration. Exerts its function also by modulating the activity of other ion channels and transporters. Contributes to the regulation of the pH and the ion content of the epithelial fluid layer. Modulates the activity of the epithelial sodium channel (ENaC) complex, in part by regulating the cell surface expression of the ENaC complex. May regulate bicarbonate secretion and salvage in epithelial cells by regulating the transporter SLC4A7. Can inhibit the chloride channel activity of ANO1. Plays a role in the chloride and bicarbonate homeostasis during sperm epididymal maturation and capacitation. The protein is Cystic fibrosis transmembrane conductance regulator of Otolemur garnettii (Small-eared galago).